The following is a 333-amino-acid chain: DNA repair and recombination protein RadA (333 aa).

127–134 lines the ATP pocket; that stretch reads GEFGSGKT.

The protein belongs to the eukaryotic RecA-like protein family.

Functionally, involved in DNA repair and in homologous recombination. Binds and assemble on single-stranded DNA to form a nucleoprotein filament. Hydrolyzes ATP in a ssDNA-dependent manner and promotes DNA strand exchange between homologous DNA molecules. This chain is DNA repair and recombination protein RadA, found in Pyrobaculum arsenaticum (strain DSM 13514 / JCM 11321 / PZ6).